We begin with the raw amino-acid sequence, 166 residues long: Large ribosomal subunit protein uL10 (166 aa).

This sequence belongs to the universal ribosomal protein uL10 family. Part of the ribosomal stalk of the 50S ribosomal subunit. The N-terminus interacts with L11 and the large rRNA to form the base of the stalk. The C-terminus forms an elongated spine to which L12 dimers bind in a sequential fashion forming a multimeric L10(L12)X complex.

Functionally, forms part of the ribosomal stalk, playing a central role in the interaction of the ribosome with GTP-bound translation factors. This Streptococcus agalactiae serotype III (strain NEM316) protein is Large ribosomal subunit protein uL10.